The primary structure comprises 80 residues: Large ribosomal subunit protein uL29 (80 aa).

This sequence belongs to the universal ribosomal protein uL29 family.

The sequence is that of Large ribosomal subunit protein uL29 from Saccharopolyspora erythraea (strain ATCC 11635 / DSM 40517 / JCM 4748 / NBRC 13426 / NCIMB 8594 / NRRL 2338).